Here is a 463-residue protein sequence, read N- to C-terminus: MRKILVIGDLIADYYLWGKSERLSPEAPVPILEVKKESKSLGGAANVANNLISLGAQVFLCGVVGDDLEGKHFINALKIREVDTSGVLIDKTRCTTLKTRIIVQNQQIVRVDKEIKDPLNADLRKNLLDFVAEKIQEMDGIILSDYNKGVLDFKITQTIIALANKHYKLILCDPKGKDYSKYSHASLITPNRFELEQALHLKLDGDANLLKALQILQETYHIAMPLVTLSEQGIAFLEKNELINCPTIAKEVYDVTGAGDTVIASLTLSLLESKNLKEACEFANAAAAVVVGKMGSALASLEEIALILNQTHPKILSLEKLLNILEYNKQKVVFTNGCFDILHKGHASYLQKAKALGDILIVGLNSDASIKRLKGDKRPIVGEKDRAFLLASLSCVDYIVVFEEDTPIGLIQALKPDILVKGADYLDKEVIGSEFAKETCLMAFEEGYSTSAIIEKIKRAYND.

The segment at M1 to I315 is ribokinase. ATP is bound at residue N191–E194. The active site involves D260. The interval F334 to D463 is cytidylyltransferase.

In the N-terminal section; belongs to the carbohydrate kinase PfkB family. This sequence in the C-terminal section; belongs to the cytidylyltransferase family. Homodimer.

The enzyme catalyses D-glycero-beta-D-manno-heptose 7-phosphate + ATP = D-glycero-beta-D-manno-heptose 1,7-bisphosphate + ADP + H(+). The catalysed reaction is D-glycero-beta-D-manno-heptose 1-phosphate + ATP + H(+) = ADP-D-glycero-beta-D-manno-heptose + diphosphate. It participates in nucleotide-sugar biosynthesis; ADP-L-glycero-beta-D-manno-heptose biosynthesis; ADP-L-glycero-beta-D-manno-heptose from D-glycero-beta-D-manno-heptose 7-phosphate: step 1/4. It functions in the pathway nucleotide-sugar biosynthesis; ADP-L-glycero-beta-D-manno-heptose biosynthesis; ADP-L-glycero-beta-D-manno-heptose from D-glycero-beta-D-manno-heptose 7-phosphate: step 3/4. Functionally, catalyzes the phosphorylation of D-glycero-D-manno-heptose 7-phosphate at the C-1 position to selectively form D-glycero-beta-D-manno-heptose-1,7-bisphosphate. Catalyzes the ADP transfer from ATP to D-glycero-beta-D-manno-heptose 1-phosphate, yielding ADP-D-glycero-beta-D-manno-heptose. The polypeptide is Bifunctional protein HldE (Helicobacter acinonychis (strain Sheeba)).